The sequence spans 202 residues: Small ribosomal subunit protein uS2 (202 aa).

It belongs to the universal ribosomal protein uS2 family. As to quaternary structure, part of the 30S ribosomal subunit.

The sequence is that of Small ribosomal subunit protein uS2 from Pyrococcus furiosus (strain ATCC 43587 / DSM 3638 / JCM 8422 / Vc1).